The sequence spans 312 residues: Serine/threonine-protein phosphatase PP2A catalytic subunit (312 aa).

Residues aspartate 60, histidine 62, aspartate 88, and asparagine 120 each coordinate Mn(2+). Residue histidine 121 is the Proton donor of the active site. Mn(2+) is bound by residues histidine 170 and histidine 244.

The protein belongs to the PPP phosphatase family. PP-2A subfamily. It depends on Mn(2+) as a cofactor.

It localises to the cytoplasm. The catalysed reaction is O-phospho-L-seryl-[protein] + H2O = L-seryl-[protein] + phosphate. It carries out the reaction O-phospho-L-threonyl-[protein] + H2O = L-threonyl-[protein] + phosphate. This is Serine/threonine-protein phosphatase PP2A catalytic subunit from Nicotiana tabacum (Common tobacco).